The chain runs to 665 residues: GRB2-associated-binding protein 2 (665 aa).

Ser-2 is subject to Phosphoserine. Positions 8–119 (DVVCTGWLRK…WVQSICQICG (112 aa)) constitute a PH domain. The segment at 131-184 (RNLSSASHGPRSSPAEFSSSQHLLRERKSSAPSHSSQPTLFTFEPPVSSHMQPT) is disordered. Phosphoserine occurs at positions 135, 142, 143, 149, 150, 160, 165, 211, 220, and 261. Over residues 160-170 (SAPSHSSQPTL) the composition is skewed to polar residues. Phosphothreonine is present on Thr-262. Position 263 is a phosphotyrosine (Tyr-263). Thr-275 carries the phosphothreonine modification. A phosphoserine mark is found at Ser-278 and Ser-282. Thr-284 carries the post-translational modification Phosphothreonine. A Phosphotyrosine modification is found at Tyr-290. Thr-328 carries the phosphothreonine modification. Residues 338-396 (VATPGDSAIAPPPRPPKPSQAETSQWGSIQQRPPISENSRSVAATIPRRNTLPAMDNSR) form a disordered region. The SH3-binding motif lies at 348 to 355 (PPPRPPKP). The segment covering 357–379 (QAETSQWGSIQQRPPISENSRSV) has biased composition (polar residues). Ser-365 is subject to Phosphoserine. Thr-382 and Thr-388 each carry phosphothreonine. A Phosphoserine modification is found at Ser-402. The residue at position 405 (Thr-405) is a Phosphothreonine. The tract at residues 408–445 (YPARGSGESASWSAEPPGKTAVGRSNSASSDDNYVPMN) is disordered. Position 420 is a phosphoserine (Ser-420). Over residues 430-439 (GRSNSASSDD) the composition is skewed to polar residues. Tyr-441 bears the Phosphotyrosine mark. At Ser-469 the chain carries Phosphoserine. The segment at 491 to 517 (PSRGSEIQPPPVNRNLKPDRKAKPTPL) is disordered. The SH3-binding signature appears at 499 to 508 (PPPVNRNLKP). At Ser-532 the chain carries Phosphoserine. Composition is skewed to polar residues over residues 548–566 (SSSQYCRPISTQSITSTDS) and 578–600 (NPVSASPVPSGTNSPAPKKSTGS). Disordered regions lie at residues 548 to 632 (SSSQ…KVDY) and 646 to 665 (TMQEWTDVRQSSEPSKGAKL). A Phosphoserine modification is found at Ser-612. Phosphotyrosine is present on Tyr-632. Positions 646–659 (TMQEWTDVRQSSEP) are enriched in polar residues.

Belongs to the GAB family. Part of a complex composed of EEIG1, TNFRSF11A/RANK, PLCG2, GAB2, TEC and BTK; complex formation increases in the presence of TNFSF11/RANKL. Interacts with HCK. Interacts with SHC1; may mediate interaction with receptors. Interacts with SYK. Interacts with PI-3 kinase. Interacts with GRB2 (via SH3 2 domain). Interacts (phosphorylated) with PTPN11. Interacts with TNFRSF11A (via cytoplasmic domain). Interacts (phosphorylated) with 14-3-3 family proteins SFN, YWHAB, YWHAE, YWHAG, YWHAH, YWHAQ and YWHAZ; prevents interaction with GRB2 and attenuates GAB2 signaling. In terms of processing, phosphorylated upon EGF stimulation. Phosphorylated on tyrosine residues by HCK upon IL6 signaling. Phosphorylated on tyrosine residue(s) by the thrombopoietin receptor (TPOR), stem cell factor receptor (SCFR), and T-cell and B-cell antigen receptors, gp130, IL-2R and IL-3R. Phosphorylated upon stimulation of TNFRSF11A/RANK by TNFSF11/RANKL. Dephosphorylated by PTPN11. Ubiquitously expressed.

It localises to the cytoplasm. Its subcellular location is the cell membrane. The protein localises to the membrane raft. In terms of biological role, adapter protein which acts downstream of several membrane receptors including cytokine, antigen, hormone, cell matrix and growth factor receptors to regulate multiple signaling pathways. Regulates osteoclast differentiation mediating the TNFRSF11A/RANK signaling. In allergic response, it plays a role in mast cells activation and degranulation through PI-3-kinase regulation. Also involved in the regulation of cell proliferation and hematopoiesis. The polypeptide is GRB2-associated-binding protein 2 (Gab2) (Mus musculus (Mouse)).